A 521-amino-acid chain; its full sequence is Glucose-6-phosphate isomerase (521 aa).

Catalysis depends on glutamate 351, which acts as the Proton donor. Residues histidine 382 and lysine 491 contribute to the active site.

It belongs to the GPI family.

Its subcellular location is the cytoplasm. It carries out the reaction alpha-D-glucose 6-phosphate = beta-D-fructose 6-phosphate. The protein operates within carbohydrate biosynthesis; gluconeogenesis. Its pathway is carbohydrate degradation; glycolysis; D-glyceraldehyde 3-phosphate and glycerone phosphate from D-glucose: step 2/4. Functionally, catalyzes the reversible isomerization of glucose-6-phosphate to fructose-6-phosphate. The protein is Glucose-6-phosphate isomerase of Polaromonas naphthalenivorans (strain CJ2).